Consider the following 455-residue polypeptide: Chromosomal replication initiator protein DnaA (455 aa).

The tract at residues 1-75 is domain I, interacts with DnaA modulators; it reads MLERNDLWNL…AMQATNEQIR (75 aa). The tract at residues 75 to 117 is domain II; that stretch reads RPVMITEEERQQLTRDKDSQVTTGNVAGQQPTTATTPTFMRET. The segment covering 84–93 has biased composition (basic and acidic residues); sequence RQQLTRDKDS. A disordered region spans residues 84 to 107; that stretch reads RQQLTRDKDSQVTTGNVAGQQPTT. A domain III, AAA+ region region spans residues 118–334; the sequence is KLNPKYTFDT…GALARVQAYS (217 aa). 4 residues coordinate ATP: glycine 162, glycine 164, lysine 165, and threonine 166. The tract at residues 335–455 is domain IV, binds dsDNA; the sequence is RLNNSPITTS…VGDLTGQLKS (121 aa).

Belongs to the DnaA family. In terms of assembly, oligomerizes as a right-handed, spiral filament on DNA at oriC.

Its subcellular location is the cytoplasm. Plays an essential role in the initiation and regulation of chromosomal replication. ATP-DnaA binds to the origin of replication (oriC) to initiate formation of the DNA replication initiation complex once per cell cycle. Binds the DnaA box (a 9 base pair repeat at the origin) and separates the double-stranded (ds)DNA. Forms a right-handed helical filament on oriC DNA; dsDNA binds to the exterior of the filament while single-stranded (ss)DNA is stabiized in the filament's interior. The ATP-DnaA-oriC complex binds and stabilizes one strand of the AT-rich DNA unwinding element (DUE), permitting loading of DNA polymerase. After initiation quickly degrades to an ADP-DnaA complex that is not apt for DNA replication. Binds acidic phospholipids. This chain is Chromosomal replication initiator protein DnaA, found in Lactiplantibacillus plantarum (strain ATCC BAA-793 / NCIMB 8826 / WCFS1) (Lactobacillus plantarum).